A 518-amino-acid chain; its full sequence is 2-isopropylmalate synthase (518 aa).

Residues 5 to 268 enclose the Pyruvate carboxyltransferase domain; it reads IIIFDTTLRD…DTRINTQEIH (264 aa). The Mn(2+) site is built by aspartate 14, histidine 202, histidine 204, and asparagine 238. Residues 393–518 are regulatory domain; sequence TLDVITSQCI…DLKLHKIAGV (126 aa).

This sequence belongs to the alpha-IPM synthase/homocitrate synthase family. LeuA type 1 subfamily. Homodimer. Mn(2+) serves as cofactor.

The protein resides in the cytoplasm. It catalyses the reaction 3-methyl-2-oxobutanoate + acetyl-CoA + H2O = (2S)-2-isopropylmalate + CoA + H(+). The protein operates within amino-acid biosynthesis; L-leucine biosynthesis; L-leucine from 3-methyl-2-oxobutanoate: step 1/4. Functionally, catalyzes the condensation of the acetyl group of acetyl-CoA with 3-methyl-2-oxobutanoate (2-ketoisovalerate) to form 3-carboxy-3-hydroxy-4-methylpentanoate (2-isopropylmalate). The protein is 2-isopropylmalate synthase of Pasteurella multocida (strain Pm70).